Consider the following 344-residue polypeptide: Phosphate acyltransferase (344 aa).

This sequence belongs to the PlsX family. Homodimer. Probably interacts with PlsY.

It is found in the cytoplasm. The enzyme catalyses a fatty acyl-[ACP] + phosphate = an acyl phosphate + holo-[ACP]. It participates in lipid metabolism; phospholipid metabolism. Its function is as follows. Catalyzes the reversible formation of acyl-phosphate (acyl-PO(4)) from acyl-[acyl-carrier-protein] (acyl-ACP). This enzyme utilizes acyl-ACP as fatty acyl donor, but not acyl-CoA. The chain is Phosphate acyltransferase from Actinobacillus pleuropneumoniae serotype 5b (strain L20).